A 438-amino-acid polypeptide reads, in one-letter code: Probable exopolygalacturonase B (438 aa).

Positions 1 to 15 are cleaved as a signal peptide; that stretch reads MYLLPLTLFLTAAFG. Residues Asn118, Asn185, and Asn225 are each glycosylated (N-linked (GlcNAc...) asparagine). One copy of the PbH1 1 repeat lies at 209 to 248; that stretch reads TNDVSFDNVYIHAFSTNASSDPANTDGMDSLDVDGVSFTN. The Proton donor role is filled by Asp255. Cys257 and Cys274 form a disulfide bridge. Residues Asn263 and Asn275 are each glycosylated (N-linked (GlcNAc...) asparagine). Residue His278 is part of the active site. PbH1 repeat units lie at residues 295-316 and 327-348; these read IENV…RLKA and INNV…VLDQ. 4 N-linked (GlcNAc...) asparagine glycosylation sites follow: Asn302, Asn329, Asn354, and Asn366. Cys392 and Cys398 are disulfide-bonded. The PbH1 4 repeat unit spans residues 398–430; the sequence is CTNITLSNVNLTSPKGTAEIVCDDIQGGIGVDC. N-linked (GlcNAc...) asparagine glycans are attached at residues Asn400 and Asn407.

The protein belongs to the glycosyl hydrolase 28 family.

It is found in the secreted. It catalyses the reaction [(1-&gt;4)-alpha-D-galacturonosyl](n) + H2O = alpha-D-galacturonate + [(1-&gt;4)-alpha-D-galacturonosyl](n-1). In terms of biological role, specific in hydrolyzing the terminal glycosidic bond of polygalacturonic acid and oligogalacturonates. The sequence is that of Probable exopolygalacturonase B (pgxB) from Aspergillus niger (strain ATCC MYA-4892 / CBS 513.88 / FGSC A1513).